A 339-amino-acid polypeptide reads, in one-letter code: Dihydroorotase (339 aa).

Zn(2+) contacts are provided by His12 and His14. Residues 14–16 and Asn40 each bind substrate; that span reads HVR. Positions 94, 133, 167, and 239 each coordinate Zn(2+). N6-carboxylysine is present on Lys94. His133 lines the substrate pocket. Asp239 is an active-site residue. The substrate site is built by His243 and Ala255.

Belongs to the metallo-dependent hydrolases superfamily. DHOase family. Class II DHOase subfamily. As to quaternary structure, homodimer. The cofactor is Zn(2+).

The enzyme catalyses (S)-dihydroorotate + H2O = N-carbamoyl-L-aspartate + H(+). It participates in pyrimidine metabolism; UMP biosynthesis via de novo pathway; (S)-dihydroorotate from bicarbonate: step 3/3. Its function is as follows. Catalyzes the reversible cyclization of carbamoyl aspartate to dihydroorotate. This is Dihydroorotase from Helicobacter pylori (strain HPAG1).